The chain runs to 3023 residues: MAATMIFGSFTHDLLGKAMSTIHSAVTAEKDIFSSIKERLERKRHGKICRMKNGSIYIKAASSTKVEKINAAAKKLADDKAAFLKAQPTIVDKIIVNEKIQVVEAEEVHKREDVQTVFFKKTKKRAPKLRATCSSSGLDNLYNAVANIAKASSLRVEVIHKKRVCGEFKQTRFGRALFIDVAHAKGHRRRIDCRMHRREQRTMHMFMRKTTKTEVRSKHLRKGDSGIVLLTQKIKGHLSGVRDEFFIVRGTCDDSLLEARARFSQSITLRATHFSTGDIFWKGFNASFQEQKAIGLDHTCTSDLPVEACGHVAALMCQSLFPCGKITCKRCIANLSNLDFDTFSELQGDRAMRILDVMRARFPSFTHTIRFLHDLFTQRRVTNPNTAAFREILRLIGDRNEAPFAHVNRLNEILLLGSKANPDSLAKASDSLLELARYLNNRTENIRNGSLKHFRNKISSKAHSNLALSCDNQLDQNGNFLWGLAGIAAKRFLNNYFETIDPEQGYDKYVIRKNPNGERKLAIGNFIISTNLEKLRDQLEGESIARVGITEECVSRKDGNYRYPCCCVTLEDGSPMYSELKMPTKNHLVIGNSGDPKYLDLPGEISNLMYIAKEGYCYINIFLAMLVNVDEANAKDFTKRVRDESVQKLGKWPSLIDVATECALLSTYYPAAASAELPRLLVDHAQKTIHVVDSYGSLNTGYHILKANTVSQLEKFASNTLESPMAQYKVGGLVYSENNDASAVKALTQAIFRPDVLSELIEKEPYLMVFALVSPGILMAMSNSGALEFGISKWISSDHSLVRMASILKTLASKVSVADTLALQKHIMRQNANFLCGELINGFQKKKSYTHATRFLLMISEENEMDDPVLNAGYRVLEASSHEIMEKTYLALLETSWSDLSLYGKFKSIWFTRKHFGRYKAELFPKEQTDLQGRYSNSLRFHYQSTLKRLRNKGSLCRERFLESISSARRRTTCAVFSLLHKAFPDVLKFINTLVIVSLSMQIYYMLVAIIHEHRAAKIKSAQLEERVLEDKTMLLYDDFKAKLPEGSFEEFLEYTRQRDKEVYEYLMMETTEIVEFQAKNTGQASLERIIAFVSLTLMLFDNERSDCVYKILTKFKGILGSVENNVRFQSLDTIVPTQEEKNMVIDFELDSDTAHTPQMQEQTFSDWWSNQIANNRVVPHYRTEGYFMQFTRNTASAVSHQIAHNEHKDIILMGAVGSGKSTGLPTNLCKFGGVLLLEPTRPLAENVTKQMRGSPFFASPTLRMRNLSTFGSSPITVMTTGFALHFFANNVKEFDRYQFIIFDEFHVLDSNAIAFRNLCHEYSYNGKIIKVSATPPGRECDLTTQYPVELLIEEQLSLRDFVDAQGTDAHADVVKKGDNILVYVASYNEVDQLSKMLNERGFLVTKVDGRTMKLGGVEIITKGSSIKKHFIVATNIIENGVTLDVDVVVDFGLKVVPNLDSDNRLVSYCKIPISLGERIQRFGRVGRNKPGVALRIGETIKGLVEIPSMIATEAAFLCFVYGLPVTTQNVSTSILSQVSVRQARVMCQFELPIFYTAHLVRYDGAMHPAIHNALKRFKLRDSEINLNTLAIPTSSSKTWYTGKCYKQLVGRLDIPDEIKIPFYTKEVPEKVPEQIWDVMVKFSSDAGFGRMTSAAACKVAYTLQTDIHSIQRTVQIIDRLLENEMKKRNHFNLVVNQSCSSHFMSLSSIMASLRAHYAKNHTGQNIEILQKAKAQLLEFSNLAIDPSTTEALRDFGYLEAVRFQSESEMARGLKLSGHWKWSLISRDLIVVSGVGIGLGCMLWQFFKEKMHEPVKFQGKSRRRLQFRKARDDKMGYIMHGEGDTIEHFFGAAYTKKGKSKGKTHGAGTKAHKFVNMYGVSPDEYSYVRYLDPVTGATLDESPMTDLNIVQEHFGEIRREAILADAMSPQQRNKGIQAYFVRNSTMPILKVDLTPHIPLKVCESNNIAGFPEREGELRRTGPTETLPFDALPPEKQEVAFESKALLKGVRDFNPISACVWLLENSSDGHSERLFGIGFGPYIIANQHLFRRNNGELTIKTMHGEFKVKNSTQLQMKPVEGRDIIVIKMAKDFPPFPQKLKFRQPTIKDRVCMVSTNFQQKSVSSLVSESSHIVHKEDTSFWQHWITTKDGQCGSPLVSIIDGNILGIHSLTHTTNGSNYFVEFPEKFVATYLDAADGWCKNWKFNADKISWGSFTLVEDAPEDDFMAKKTVAAIMDDLVRTQGEKRKWMLEAAHTNIQPVAHLQSQLVTKHIVKGRCKMFALYLQENADARDFFKSFMGAYGPSHLNKEAYIKDIMKYSKQIVVGSVDCDTFESSLKVLSRKMKEWGFENLEYVTDEQTIKNALNMDAAVGALYSGKKKQYFEDLSDDAVANLVQKSCLRLFKNKLGVWNGSLKAELRPFEKLIENKTRTFTAAPIETLLGGKVCVDDFNNHFYSKHIQCPWSVGMTKFYGGWNELLGKLPDGWVYCDADGSQFDSSLSPYLINAVLRLRLSSMEEWDVGQKMLQNLYTEIVYTPISTPDGTIVKKFKGNNSGQPSTVVDNTLMVVLAMYYALSKLGVDINSQEDVCKFFANGDDLIIAISPELEHVLDGFQQHFSDLGLNYDFSSRTRDKKELWFMSHRALSKDGILIPKLEPERIVSILEWDRSAEPHHRLEAICASMIEAWGYTDLLQNIRRFYKWTIEQEPYRSLAEQGLAPYLSEVALRRLYTSQIATDNELTDYYKEILANNEFLRETVRFQSDTVDAGKDKARDQKLADKPTLAIDRTKDKDVNTGTSGTFSIPRLKKAAMNMKLPKVGGSSVVNLDHLLTYKPAQEFVVNTRATHSQFKAWHTNVMAELELNEEQMKIVLNGFMIWCIENGTSPNISGVWTMMDGDEQVEYPIEPMVKHANPSLRQIMKHFSNLAEAYIRMRNSEQVYIPRYGLQRGLVDRNLAPFAFDFFEVNGATPVRAREAHAQMKAAALRNSQQRMFCLDGSVSGQEENTERHTVDDVNAQMHHLLGVKGV.

One can recognise a Peptidase S30 domain in the interval 132-274 (TCSSSGLDNL…QSITLRATHF (143 aa)). Residues H183, D192, and S225 each act as for P1 proteinase activity in the active site. The Involved in interaction with stylet and aphid transmission motif lies at 325–328 (KITC). Positions 583 to 585 (PTK) match the Involved in virions binding and aphid transmission motif. Positions 609 to 731 (MYIAKEGYCY…ESPMAQYKVG (123 aa)) constitute a Peptidase C6 domain. Catalysis depends on for helper component proteinase activity residues C617 and H690. Residues 1202 to 1354 (QIAHNEHKDI…TQYPVELLIE (153 aa)) form the Helicase ATP-binding domain. An ATP-binding site is contributed by 1215–1222 (GAVGSGKS). A DEFH box motif is present at residues 1304 to 1307 (DEFH). Positions 1367–1532 (GTDAHADVVK…GLPVTTQNVS (166 aa)) constitute a Helicase C-terminal domain. A GxxxG motif motif is present at residues 1796-1800 (GIGLG). Residues 1856–1863 (KKGKSKGK) carry the Nuclear localization signal motif. At Y1878 the chain carries O-(5'-phospho-RNA)-tyrosine. Y1878 bears the O-UMP-tyrosine; transient mark. The Peptidase C4 domain maps to 2002 to 2218 (SKALLKGVRD…ISWGSFTLVE (217 aa)). Residues H2047, D2082, and C2152 each act as for nuclear inclusion protein A activity in the active site. One can recognise a RdRp catalytic domain in the interval 2484 to 2608 (WVYCDADGSQ…AISPELEHVL (125 aa)). Position 3006 is a phosphothreonine (T3006).

The protein belongs to the potyviridae genome polyprotein family. Interacts with host eIF4E protein (via cap-binding region); this interaction mediates the translation of the VPg-viral RNA conjugates. Part of a complex that comprises VPg, RNA, host EIF4E and EIF4G; this interaction mediates the translation of the VPg-viral RNA conjugates. VPg is uridylylated by the polymerase and is covalently attached to the 5'-end of the genomic RNA. This uridylylated form acts as a nucleotide-peptide primer for the polymerase. In terms of processing, potyviral RNA is expressed as two polyproteins which undergo post-translational proteolytic processing. Genome polyprotein is processed by NIa-pro, P1 and HC-pro proteinases resulting in the production of at least ten individual proteins. P3N-PIPO polyprotein is cleaved by P1 and HC-pro proteinases resulting in the production of three individual proteins. The P1 proteinase and the HC-pro cleave only their respective C-termini autocatalytically. 6K1 is essential for proper proteolytic separation of P3 from CI.

It is found in the host cytoplasmic vesicle. It localises to the host nucleus. Its subcellular location is the virion. The catalysed reaction is RNA(n) + a ribonucleoside 5'-triphosphate = RNA(n+1) + diphosphate. It catalyses the reaction Hydrolyzes glutaminyl bonds, and activity is further restricted by preferences for the amino acids in P6 - P1' that vary with the species of potyvirus, e.g. Glu-Xaa-Xaa-Tyr-Xaa-Gln-|-(Ser or Gly) for the enzyme from tobacco etch virus. The natural substrate is the viral polyprotein, but other proteins and oligopeptides containing the appropriate consensus sequence are also cleaved.. The enzyme catalyses Hydrolyzes a Gly-|-Gly bond at its own C-terminus, commonly in the sequence -Tyr-Xaa-Val-Gly-|-Gly, in the processing of the potyviral polyprotein.. Its function is as follows. Required for aphid transmission and also has proteolytic activity. Only cleaves a Gly-Gly dipeptide at its own C-terminus. Interacts with virions and aphid stylets. Acts as a suppressor of RNA-mediated gene silencing, also known as post-transcriptional gene silencing (PTGS), a mechanism of plant viral defense that limits the accumulation of viral RNAs. May have RNA-binding activity. Functionally, has helicase activity. It may be involved in replication. Indispensable for virus replication. Reduces the abundance of host transcripts related to jasmonic acid biosynthesis therefore altering the host defenses. In order to increase its own stability, decreases host protein degradation pathways. In terms of biological role, indispensable for virus replication. Its function is as follows. Mediates the cap-independent, EIF4E-dependent translation of viral genomic RNAs. Binds to the cap-binding site of host EIF4E and thus interferes with the host EIF4E-dependent mRNA export and translation. VPg-RNA directly binds EIF4E and is a template for transcription. Also forms trimeric complexes with EIF4E-EIF4G, which are templates for translation. Functionally, has RNA-binding and proteolytic activities. Main protease that processes most of the polyprotein cleavages. An RNA-dependent RNA polymerase that plays an essential role in the virus replication. In terms of biological role, involved in aphid transmission, cell-to-cell and systemis movement, encapsidation of the viral RNA and in the regulation of viral RNA amplification. The chain is Genome polyprotein from Tobacco vein mottling virus (TVMV).